The primary structure comprises 239 residues: Ribonuclease PH (239 aa).

Residues Arg-86 and 124–126 (GTR) contribute to the phosphate site.

The protein belongs to the RNase PH family. As to quaternary structure, homohexameric ring arranged as a trimer of dimers.

The enzyme catalyses tRNA(n+1) + phosphate = tRNA(n) + a ribonucleoside 5'-diphosphate. Phosphorolytic 3'-5' exoribonuclease that plays an important role in tRNA 3'-end maturation. Removes nucleotide residues following the 3'-CCA terminus of tRNAs; can also add nucleotides to the ends of RNA molecules by using nucleoside diphosphates as substrates, but this may not be physiologically important. Probably plays a role in initiation of 16S rRNA degradation (leading to ribosome degradation) during starvation. This chain is Ribonuclease PH, found in Rhizobium etli (strain ATCC 51251 / DSM 11541 / JCM 21823 / NBRC 15573 / CFN 42).